Here is a 457-residue protein sequence, read N- to C-terminus: uncharacterized protein (457 aa).

The signal sequence occupies residues 1–18 (MKLLISLLWSIFFSIVYS). Residues 19–173 (EKTLLNFKHY…GGLPASQFPR (155 aa)) are Lumenal-facing. Residues 174 to 194 (MPISGGITIAYSVILALWMFF) form a helical membrane-spanning segment. The Cytoplasmic segment spans residues 195–207 (RFQYKHSIVTVQK). The chain crosses the membrane as a helical span at residues 208 to 228 (AIMFLLIFSCAQQAVTSIVLD). At 229–243 (TENLRNRGNFTWLGE) the chain is on the lumenal side. The helical transmembrane segment at 244–264 (TLVSILFACQLVLDLALLLIL) threads the bilayer. The Cytoplasmic portion of the chain corresponds to 265–284 (SWGYTRYSTNMRDRLFTEAK). The chain crosses the membrane as a helical span at residues 285-305 (IPLIICFFALFVVRFFAITIQ). At 306-314 (SIHLGLWFC) the chain is on the lumenal side. A helical membrane pass occupies residues 315–335 (FFFLTACISALYILFGAFVAL). At 336-358 (PSTLRALVEQRYYTLHSIYKIFR) the chain is on the cytoplasmic side. The chain crosses the membrane as a helical span at residues 359–379 (IMVLCGVVTIFSFSLVALIFC). At 380 to 457 (SNTNNNSTNK…EEDIRADKSK (78 aa)) the chain is on the lumenal side.

The protein belongs to the LU7TM family.

Its subcellular location is the endoplasmic reticulum membrane. This is an uncharacterized protein from Schizosaccharomyces pombe (strain 972 / ATCC 24843) (Fission yeast).